The sequence spans 336 residues: MQIQNSHDLSSSNTLQLRSLAERFVELYTPADLSTLLMNPELKNLPWKILGGGSNLVLPSQIEGLVLKVSNLGRKLIHEDPDYWFVKAQAGEVWNDFVQWTLEEGYWGLENLSLIPGTVGAAPIQNIGAYGVEVKDTLWEVHALDLQTGEPRVFSNKECQFSYRDSYFKQEGAGRYLIWDVTFRLPKKNVLHLEYGDIRKEVERNNWPQDPRHVAQAVINIRQSKLPDPKVIGNAGSFFKNPIVSKELRDGLLSKHNDLVSFPYEDRYKLAAGWLIDRAGWKGKKLGPVGMYEKQALVLVNHGGATADDVWKLARQVSSDVHTQFGVEIEAEPIRW.

Positions 17 to 188 (LRSLAERFVE…WDVTFRLPKK (172 aa)) constitute an FAD-binding PCMH-type domain. Residue Arg-164 is part of the active site. The active-site Proton donor is the Ser-237. Glu-332 is an active-site residue.

The protein belongs to the MurB family. FAD is required as a cofactor.

The protein localises to the cytoplasm. The catalysed reaction is UDP-N-acetyl-alpha-D-muramate + NADP(+) = UDP-N-acetyl-3-O-(1-carboxyvinyl)-alpha-D-glucosamine + NADPH + H(+). It participates in cell wall biogenesis; peptidoglycan biosynthesis. Functionally, cell wall formation. The protein is UDP-N-acetylenolpyruvoylglucosamine reductase of Bdellovibrio bacteriovorus (strain ATCC 15356 / DSM 50701 / NCIMB 9529 / HD100).